The primary structure comprises 854 residues: Aryl hydrocarbon receptor (854 aa).

The propeptide occupies 1–9; the sequence is MSSGANITY. Residues 1 to 38 form a disordered region; it reads MSSGANITYASRKRRKPVQKTVKPIPAEGIKSNPSKRH. 2 short sequence motifs (nuclear localization signal) span residues 12-15 and 36-41; these read RKRR and KRHRDR. A bHLH domain is found at 26–79; that stretch reads PAEGIKSNPSKRHRDRLNTELDRLASLLPFPQDVINKLDKLSVLRLSVSYLRAK. The DNA-binding stretch occupies residues 37–65; that stretch reads RHRDRLNTELDRLASLLPFPQDVINKLDK. Required for maintaining the overall integrity of the AHR:ARNT heterodimer and its transcriptional activity stretches follow at residues 49–81, 116–124, and 264–266; these read LASL…AKSF, LLQALNGFV, and FAI. The Nuclear export signal signature appears at 63-71; that stretch reads LDKLSVLRL. The PAS 1 domain occupies 111 to 175; sequence QEGEFLLQAL…AEFQRQLHWA (65 aa). A PAS 2 domain is found at 270–340; it reads LQPPSILEIR…CAESHIRMIK (71 aa). Residues 346 to 387 form the PAC domain; it reads MTVFRLLAKHSRWRWVQSNARLIYRNGRPDYIIATQRPLTDE. Positions 425–451 are disordered; that stretch reads LPIRTKSNTSRKDWAPQSTPSKDSFHP. Residues 440–451 show a composition bias toward polar residues; the sequence is PQSTPSKDSFHP.

As to quaternary structure, homodimer. Heterodimer; efficient DNA binding requires dimerization with another bHLH protein. Interacts with ARNT; the heterodimer ARNT:AHR binds to core DNA sequence 5'-TGCGTG-3' within the dioxin response element (DRE) of target gene promoters and activates their transcription. Binds MYBBP1A. Interacts with coactivators including SRC-1, RIP140 and NOCA7, and with the corepressor SMRT. Interacts with NEDD8 and IVNS1ABP. Interacts with BMAL1. Interacts with HSP90AB1. Interacts with TIPARP; leading to mono-ADP-ribosylation of AHR and subsequent inhibition of AHR. In terms of processing, mono-ADP-ribosylated, leading to inhibit transcription activator activity of AHR.

The protein localises to the cytoplasm. Its subcellular location is the nucleus. Ligand-activated transcription factor that enables cells to adapt to changing conditions by sensing compounds from the environment, diet, microbiome and cellular metabolism, and which plays important roles in development, immunity and cancer. Upon ligand binding, translocates into the nucleus, where it heterodimerizes with ARNT and induces transcription by binding to xenobiotic response elements (XRE). Regulates a variety of biological processes, including angiogenesis, hematopoiesis, drug and lipid metabolism, cell motility and immune modulation. Xenobiotics can act as ligands: upon xenobiotic-binding, activates the expression of multiple phase I and II xenobiotic chemical metabolizing enzyme genes (such as the CYP1A1 gene). Mediates biochemical and toxic effects of halogenated aromatic hydrocarbons. Next to xenobiotics, natural ligands derived from plants, microbiota, and endogenous metabolism are potent AHR agonists. Tryptophan (Trp) derivatives constitute an important class of endogenous AHR ligands. Acts as a negative regulator of anti-tumor immunity: indoles and kynurenic acid generated by Trp catabolism act as ligand and activate AHR, thereby promoting AHR-driven cancer cell motility and suppressing adaptive immunity. Regulates the circadian clock by inhibiting the basal and circadian expression of the core circadian component PER1. Inhibits PER1 by repressing the CLOCK-BMAL1 heterodimer mediated transcriptional activation of PER1. The heterodimer ARNT:AHR binds to core DNA sequence 5'-TGCGTG-3' within the dioxin response element (DRE) of target gene promoters and activates their transcription. The polypeptide is Aryl hydrocarbon receptor (Ahr) (Mus spicilegus (Steppe mouse)).